Consider the following 252-residue polypeptide: Flavin-dependent thymidylate synthase (252 aa).

A ThyX domain is found at 7–235 (LDVQLVACST…PTVFSDFETS (229 aa)). DUMP contacts are provided by residues 94-97 (ELVR), 105-109 (QLSQR), and Arg-174. FAD contacts are provided by residues 97-99 (RHR) and Gln-105. Positions 97–107 (RHRHFSFSQLS) match the ThyX motif motif. FAD is bound by residues 190–192 (NFR) and His-196. Position 201 (Arg-201) interacts with dUMP. Arg-201 functions as the Involved in ionization of N3 of dUMP, leading to its activation in the catalytic mechanism.

This sequence belongs to the thymidylate synthase ThyX family. In terms of assembly, homotetramer. It depends on FAD as a cofactor.

The enzyme catalyses dUMP + (6R)-5,10-methylene-5,6,7,8-tetrahydrofolate + NADPH + H(+) = dTMP + (6S)-5,6,7,8-tetrahydrofolate + NADP(+). It participates in pyrimidine metabolism; dTTP biosynthesis. Catalyzes the reductive methylation of 2'-deoxyuridine-5'-monophosphate (dUMP) to 2'-deoxythymidine-5'-monophosphate (dTMP) while utilizing 5,10-methylenetetrahydrofolate (mTHF) as the methyl donor, and NADPH and FADH(2) as the reductant. This is Flavin-dependent thymidylate synthase from Corynebacterium diphtheriae (strain ATCC 700971 / NCTC 13129 / Biotype gravis).